We begin with the raw amino-acid sequence, 408 residues long: MLEKLLEQAGIKLDFDGEEEKKSEIVDEFSGYKINIAVVGVGGSGNNTISRLYDLGVQGADLIAMNTDAQHLAITKAHKKVLLGKHITQGKGSGGDPKVGYLAAEASAQEIAAAVDGYDLVFITAGMGNGTGTGAAPVVARIVKETARNNGRFQEPLVVSVVTFPFKTEGTVRIEKAKWGIQRLLEYSDTVIIIQNDKLLELVPKLPLQSAFRFADELIARMVKGIVETIKLNSIVNIDFADVYSIMKGGGPALIGIGESDSNNRAVDAVNNALTNKMLDVEFGSGEKALVHFTIGPDVSLEEINKAMEVVYEKLSEKSEIKWGAMVDPEMGKTVRAMVIMTGVRSPYILGNVNALTDSSSWVVPKDRRLIGDPRIEKMFPDFNGSRAGRKRPSVGDAILKELGFKEL.

GTP is bound by residues 130–132 (GTG), Glu-169, Arg-173, and Asp-216.

Belongs to the FtsZ family. In terms of assembly, homodimer. Polymerizes to form a dynamic ring structure in a strictly GTP-dependent manner. Interacts directly with several other division proteins.

The protein resides in the cytoplasm. Essential cell division protein that forms a contractile ring structure (Z ring) at the future cell division site. The regulation of the ring assembly controls the timing and the location of cell division. One of the functions of the FtsZ ring is to recruit other cell division proteins to the septum to produce a new cell wall between the dividing cells. Binds GTP and shows GTPase activity. The polypeptide is Cell division protein FtsZ 2 (Pyrococcus furiosus (strain ATCC 43587 / DSM 3638 / JCM 8422 / Vc1)).